The primary structure comprises 65 residues: U12-theraphotoxin-Cg1a (65 aa).

The signal sequence occupies residues 1–21 (MKTSVLLFMLGLTFLFDGLAA). The propeptide occupies 22–29 (INLQEGER). Intrachain disulfides connect Cys31–Cys45, Cys38–Cys50, and Cys44–Cys57.

It belongs to the neurotoxin 10 (Hwtx-1) family. 31 (Jztx-15) subfamily. Expressed by the venom gland.

The protein localises to the secreted. Functionally, probable ion channel inhibitor. This chain is U12-theraphotoxin-Cg1a, found in Chilobrachys guangxiensis (Chinese earth tiger tarantula).